We begin with the raw amino-acid sequence, 87 residues long: Kappa 1b-bungarotoxin (87 aa).

The N-terminal stretch at 1–21 is a signal peptide; the sequence is MKTLLLTLVVVTIVCLDLGYT. Cystine bridges form between C24/C42, C35/C63, C48/C52, C67/C79, and C80/C85.

This sequence belongs to the three-finger toxin family. Long-chain subfamily. Kappa-neurotoxin sub-subfamily. Homo- and heterodimer; non-covalently linked. Expressed by the venom gland.

The protein localises to the secreted. In terms of biological role, postsynaptic neurotoxin that binds and inhibits neuronal nicotinic acetylcholine receptors (nAChR) with high affinity (IC(50)&lt;100 nM). Is a selective, and slowly reversible antagonist of alpha-3/CHRNA3-containing and some alpha-4/CHRNA4-containing AChRs. The protein is Kappa 1b-bungarotoxin of Bungarus candidus (Malayan krait).